The sequence spans 299 residues: Aspartate carbamoyltransferase catalytic subunit (299 aa).

Carbamoyl phosphate-binding residues include Arg51 and Thr52. Lys80 contributes to the L-aspartate binding site. Positions 101, 129, and 132 each coordinate carbamoyl phosphate. Residues Arg162 and Arg221 each contribute to the L-aspartate site. The carbamoyl phosphate site is built by Leu260 and Pro261.

The protein belongs to the aspartate/ornithine carbamoyltransferase superfamily. ATCase family. In terms of assembly, heterooligomer of catalytic and regulatory chains.

It catalyses the reaction carbamoyl phosphate + L-aspartate = N-carbamoyl-L-aspartate + phosphate + H(+). The protein operates within pyrimidine metabolism; UMP biosynthesis via de novo pathway; (S)-dihydroorotate from bicarbonate: step 2/3. In terms of biological role, catalyzes the condensation of carbamoyl phosphate and aspartate to form carbamoyl aspartate and inorganic phosphate, the committed step in the de novo pyrimidine nucleotide biosynthesis pathway. This Sulfolobus acidocaldarius (strain ATCC 33909 / DSM 639 / JCM 8929 / NBRC 15157 / NCIMB 11770) protein is Aspartate carbamoyltransferase catalytic subunit.